The primary structure comprises 282 residues: Pantothenate synthetase (282 aa).

Met30–His37 is a binding site for ATP. The active-site Proton donor is His37. Gln61 contributes to the (R)-pantoate binding site. Residue Gln61 participates in beta-alanine binding. Position 149–152 (Gly149–Asp152) interacts with ATP. A (R)-pantoate-binding site is contributed by Gln155. Residues Ile178 and Met186–Arg189 contribute to the ATP site.

The protein belongs to the pantothenate synthetase family. In terms of assembly, homodimer.

The protein resides in the cytoplasm. The enzyme catalyses (R)-pantoate + beta-alanine + ATP = (R)-pantothenate + AMP + diphosphate + H(+). Its pathway is cofactor biosynthesis; (R)-pantothenate biosynthesis; (R)-pantothenate from (R)-pantoate and beta-alanine: step 1/1. In terms of biological role, catalyzes the condensation of pantoate with beta-alanine in an ATP-dependent reaction via a pantoyl-adenylate intermediate. This is Pantothenate synthetase from Shewanella piezotolerans (strain WP3 / JCM 13877).